The following is a 281-amino-acid chain: Beta-etherase (281 aa).

The 77-residue stretch at 11–87 (DLQLESGCTI…YLDEKYPDRP (77 aa)) folds into the GST N-terminal domain. A disordered region spans residues 244-281 (GDPEPFVRQTGPAGAGGQALNKGPQTTKMPPRVAEKAD).

It belongs to the GST superfamily.

It localises to the cell inner membrane. Able to degrade various dimeric lignin compounds. Catalyzes the unique and reductive cleavage of arylglycerol-beta-aryl ether. The polypeptide is Beta-etherase (ligE) (Sphingobium sp. (strain NBRC 103272 / SYK-6)).